The primary structure comprises 431 residues: Serine/threonine-protein kinase Sgk1 (431 aa).

Residues 58 to 93 (LNLTPPQDPELMNSNPSPPPSPSQQINLGPSSNPSA) form a disordered region. Residues 81-93 (QQINLGPSSNPSA) are compositionally biased toward polar residues. The Protein kinase domain maps to 98–355 (FHFLKVIGKG…FTEIKNHVFF (258 aa)). ATP is bound by residues 104–112 (IGKGSFGKV) and Lys-127. The active-site Proton acceptor is Asp-222. An AGC-kinase C-terminal domain is found at 356 to 431 (SPINWDDLNA…SYAPSMDSYL (76 aa)).

This sequence belongs to the protein kinase superfamily. AGC Ser/Thr protein kinase family.

It is found in the cytoplasm. The protein localises to the nucleus. The protein resides in the endoplasmic reticulum. It carries out the reaction L-seryl-[protein] + ATP = O-phospho-L-seryl-[protein] + ADP + H(+). The enzyme catalyses L-threonyl-[protein] + ATP = O-phospho-L-threonyl-[protein] + ADP + H(+). Its function is as follows. Protein kinase that may play an important role in cellular stress response. May be involved in the regulation of processes such as cell survival, neuronal excitability and renal sodium excretion. The polypeptide is Serine/threonine-protein kinase Sgk1 (sgk1) (Fundulus heteroclitus (Killifish)).